A 95-amino-acid polypeptide reads, in one-letter code: Small ribosomal subunit protein uS19 (95 aa).

The disordered stretch occupies residues 76-95 (PTRTFRGHGGKKADKRGKLK). The segment covering 80-95 (FRGHGGKKADKRGKLK) has biased composition (basic residues).

The protein belongs to the universal ribosomal protein uS19 family.

Functionally, protein S19 forms a complex with S13 that binds strongly to the 16S ribosomal RNA. The sequence is that of Small ribosomal subunit protein uS19 from Herpetosiphon aurantiacus (strain ATCC 23779 / DSM 785 / 114-95).